Consider the following 417-residue polypeptide: Gamma-glutamyl phosphate reductase (417 aa).

This sequence belongs to the gamma-glutamyl phosphate reductase family.

Its subcellular location is the cytoplasm. The catalysed reaction is L-glutamate 5-semialdehyde + phosphate + NADP(+) = L-glutamyl 5-phosphate + NADPH + H(+). The protein operates within amino-acid biosynthesis; L-proline biosynthesis; L-glutamate 5-semialdehyde from L-glutamate: step 2/2. Its function is as follows. Catalyzes the NADPH-dependent reduction of L-glutamate 5-phosphate into L-glutamate 5-semialdehyde and phosphate. The product spontaneously undergoes cyclization to form 1-pyrroline-5-carboxylate. The protein is Gamma-glutamyl phosphate reductase of Meiothermus ruber.